A 255-amino-acid chain; its full sequence is tRNA (guanine-N(1)-)-methyltransferase (255 aa).

Residues glycine 113 and 133-138 (IGDYVL) contribute to the S-adenosyl-L-methionine site.

The protein belongs to the RNA methyltransferase TrmD family. As to quaternary structure, homodimer.

The protein resides in the cytoplasm. It catalyses the reaction guanosine(37) in tRNA + S-adenosyl-L-methionine = N(1)-methylguanosine(37) in tRNA + S-adenosyl-L-homocysteine + H(+). Specifically methylates guanosine-37 in various tRNAs. This is tRNA (guanine-N(1)-)-methyltransferase from Salmonella paratyphi A (strain ATCC 9150 / SARB42).